A 355-amino-acid polypeptide reads, in one-letter code: Syntaxin-5 (355 aa).

The Cytoplasmic segment spans residues 1–333; it reads MIPRKRYGSK…KYFQSVTSNR (333 aa). Residues 245–247 carry the IxM motif; signal for cargo packaging into COPII-coated vesicles motif; it reads IDM. A t-SNARE coiled-coil homology domain is found at 263-325; the sequence is DSYIQSRADT…EAAHSEILKY (63 aa). A coiled-coil region spans residues 287 to 318; the sequence is FQQLAHMVKEQEETIQRIDENVLGAQLDVEAA. A helical; Anchor for type IV membrane protein membrane pass occupies residues 334 to 354; the sequence is WLMVKIFLILIVFFIIFVVFL. Residue Ala-355 is a topological domain, vesicular.

Belongs to the syntaxin family. In terms of assembly, part of a ternary complex containing STX5A, NSFL1C and VCP. Part of a unique SNARE complex composed of the Golgi SNAREs GOSR1, GOSR2 and YKT6. This complex also includes VTI1A. Component of a SNARE complex consisting of STX5, YKT6, GOSR1 and BET1L. Interacts with BET1L. Interacts with BET1. Interacts with COG4. Interacts with GM130/GOLGA2. Interacts (via IxM motif) with SEC24C and SEC24D; mediates STX5 packaging into COPII-coated vesicles. Interacts with VLDLR; this interaction mediates VLDLR translocation from the endoplasmic reticulum to the plasma membrane. Expressed in the brain, heart, spleen, lung, liver, kidney and testis.

The protein localises to the endoplasmic reticulum-Golgi intermediate compartment membrane. It localises to the golgi apparatus membrane. Functionally, mediates endoplasmic reticulum to Golgi transport. Together with p115/USO1 and GM130/GOLGA2, involved in vesicle tethering and fusion at the cis-Golgi membrane to maintain the stacked and inter-connected structure of the Golgi apparatus. Its function is as follows. Required for Golgi to endoplasmic reticulum retrogade transport, and for intra-Golgi transport. In Rattus norvegicus (Rat), this protein is Syntaxin-5 (Stx5).